The chain runs to 282 residues: NADPH-dependent 7-cyano-7-deazaguanine reductase (282 aa).

Substrate is bound at residue 88–90 (IES). 90–91 (SK) is a binding site for NADPH. Cysteine 190 (thioimide intermediate) is an active-site residue. Aspartate 197 (proton donor) is an active-site residue. Residue 229 to 230 (HE) coordinates substrate. 258 to 259 (RG) contributes to the NADPH binding site.

It belongs to the GTP cyclohydrolase I family. QueF type 2 subfamily. Homodimer.

The protein resides in the cytoplasm. It carries out the reaction 7-aminomethyl-7-carbaguanine + 2 NADP(+) = 7-cyano-7-deazaguanine + 2 NADPH + 3 H(+). The protein operates within tRNA modification; tRNA-queuosine biosynthesis. Catalyzes the NADPH-dependent reduction of 7-cyano-7-deazaguanine (preQ0) to 7-aminomethyl-7-deazaguanine (preQ1). This Salmonella paratyphi B (strain ATCC BAA-1250 / SPB7) protein is NADPH-dependent 7-cyano-7-deazaguanine reductase.